The sequence spans 476 residues: 3-isopropylmalate dehydratase large subunit (476 aa).

[4Fe-4S] cluster-binding residues include Cys353, Cys413, and Cys416.

The protein belongs to the aconitase/IPM isomerase family. LeuC type 1 subfamily. As to quaternary structure, heterodimer of LeuC and LeuD. [4Fe-4S] cluster is required as a cofactor.

The enzyme catalyses (2R,3S)-3-isopropylmalate = (2S)-2-isopropylmalate. It functions in the pathway amino-acid biosynthesis; L-leucine biosynthesis; L-leucine from 3-methyl-2-oxobutanoate: step 2/4. In terms of biological role, catalyzes the isomerization between 2-isopropylmalate and 3-isopropylmalate, via the formation of 2-isopropylmaleate. In Photobacterium profundum (strain SS9), this protein is 3-isopropylmalate dehydratase large subunit.